The following is a 102-amino-acid chain: Movement protein (102 aa).

A helical membrane pass occupies residues 43 to 63; it reads VVALIVILFAVGIVYLAYTLF. Residues 82–102 form a disordered region; sequence IGFGNTPLRRPGEGNPNGGPV.

The protein belongs to the mastrevirus movement protein family. As to quaternary structure, interacts with the capsid protein (CP). Part of a MP-CP-viral DNA complex.

The protein resides in the host membrane. In terms of biological role, involved in the viral transport within, and between cells. The polypeptide is Movement protein (Tobacco yellow dwarf virus (strain Australia) (TYDV)).